We begin with the raw amino-acid sequence, 406 residues long: Tryptophan synthase beta chain (406 aa).

Lysine 99 carries the post-translational modification N6-(pyridoxal phosphate)lysine.

This sequence belongs to the TrpB family. Tetramer of two alpha and two beta chains. Pyridoxal 5'-phosphate is required as a cofactor.

It catalyses the reaction (1S,2R)-1-C-(indol-3-yl)glycerol 3-phosphate + L-serine = D-glyceraldehyde 3-phosphate + L-tryptophan + H2O. It participates in amino-acid biosynthesis; L-tryptophan biosynthesis; L-tryptophan from chorismate: step 5/5. The beta subunit is responsible for the synthesis of L-tryptophan from indole and L-serine. The chain is Tryptophan synthase beta chain from Brucella melitensis biotype 2 (strain ATCC 23457).